Here is a 148-residue protein sequence, read N- to C-terminus: UPF0260 protein Maqu_1608 (148 aa).

It belongs to the UPF0260 family.

The polypeptide is UPF0260 protein Maqu_1608 (Marinobacter nauticus (strain ATCC 700491 / DSM 11845 / VT8) (Marinobacter aquaeolei)).